Consider the following 371-residue polypeptide: Probable palmitoyltransferase ZDHHC11B (371 aa).

Helical transmembrane passes span 43–63 and 70–90; these read VVTW…FIPL and YIAY…HLIA. Positions 125–175 constitute a DHHC domain; the sequence is QFCHLCKVTVNKKTKHCISCNKCVSGFDHHCKWINNCVGSRNYWFFFSTVA. Cys155 (S-palmitoyl cysteine intermediate) is an active-site residue. 3 consecutive transmembrane segments (helical) span residues 177–197, 216–236, and 239–259; these read ATAG…QYLV, TWLL…VVII, and LVLL…IFHI. A disordered region spans residues 335 to 371; sequence DGDSKAQEADDAPSTSTLGLQQETTEPMKTDSAESED. Polar residues predominate over residues 347–359; that stretch reads PSTSTLGLQQETT. The span at 360 to 371 shows a compositional bias: basic and acidic residues; sequence EPMKTDSAESED.

This sequence belongs to the DHHC palmitoyltransferase family.

It localises to the membrane. It carries out the reaction L-cysteinyl-[protein] + hexadecanoyl-CoA = S-hexadecanoyl-L-cysteinyl-[protein] + CoA. In terms of biological role, probable palmitoyltransferase that could catalyze the addition of palmitate onto various protein substrates and be involved in a variety of cellular processes. May play a role in cell proliferation. This Homo sapiens (Human) protein is Probable palmitoyltransferase ZDHHC11B.